A 160-amino-acid chain; its full sequence is uncharacterized protein (160 aa).

This is an uncharacterized protein from Galliformes (FAdV-1).